A 426-amino-acid chain; its full sequence is Glutamyl-tRNA reductase (426 aa).

Substrate is bound by residues 51 to 54 (TCNR), serine 110, 115 to 117 (EAQ), and glutamine 121. Residue cysteine 52 is the Nucleophile of the active site. 190-195 (GAGEMA) contacts NADP(+).

It belongs to the glutamyl-tRNA reductase family. In terms of assembly, homodimer.

It carries out the reaction (S)-4-amino-5-oxopentanoate + tRNA(Glu) + NADP(+) = L-glutamyl-tRNA(Glu) + NADPH + H(+). The protein operates within porphyrin-containing compound metabolism; protoporphyrin-IX biosynthesis; 5-aminolevulinate from L-glutamyl-tRNA(Glu): step 1/2. Catalyzes the NADPH-dependent reduction of glutamyl-tRNA(Glu) to glutamate 1-semialdehyde (GSA). In Desulfotalea psychrophila (strain LSv54 / DSM 12343), this protein is Glutamyl-tRNA reductase.